The sequence spans 400 residues: tRNA-specific adenosine deaminase TAD3 (400 aa).

The 136-residue stretch at 250–385 (SQWHPLRHAS…KSLNHHYAVF (136 aa)) folds into the CMP/dCMP-type deaminase domain. His257 is a Zn(2+) binding site. The segment at 273-320 (LFPNPSKIFDQDHVPPSNTDSPAKKQKTSSQSPDVQNDSREETVRDPS) is disordered. Positions 309-320 (NDSREETVRDPS) are enriched in basic and acidic residues. Residues Cys339 and Cys342 each coordinate Zn(2+).

Belongs to the cytidine and deoxycytidylate deaminase family. ADAT3 subfamily. In terms of assembly, interacts with TAD2.

Its subcellular location is the nucleus. It is found in the cytoplasm. The enzyme catalyses adenosine(34) in tRNA + H2O + H(+) = inosine(34) in tRNA + NH4(+). Involved in RNA editing. Catalyzes the specific deamination of adenosine-34 in several cytosolic tRNA species. Generates inosine at the wobble position of the anticodon loop. This chain is tRNA-specific adenosine deaminase TAD3, found in Arabidopsis thaliana (Mouse-ear cress).